Reading from the N-terminus, the 161-residue chain is Carboxysome assembly protein CcmN (161 aa).

The segment at 111-140 (LLSAETPPTTATVSSSEPAGRSPQSSAIAH) is disordered. Residues 116-137 (TPPTTATVSSSEPAGRSPQSSA) are compositionally biased toward polar residues. The Encapsulation peptide signature appears at 144–161 (VYGKEQFLRMRQSMFPDR).

The protein belongs to the CcmN family. Interacts with CcmM via the N-terminus of CcmN. Interacts with CcmK2 via the 18 C-terminal residues.

It is found in the carboxysome. Its function is as follows. Required for carboxysome formation; the N-terminus interacts with CcmM which itself binds RuBisCO (ribulose bisphosphate carboxylase, rbcL-rbcS), while the C-terminal 18 residues interact with carboxysome shell protein CcmK2. Required for growth in normal air. Beta-carboxysome assembly initiates when soluble RuBisCO is condensed into a liquid matrix in a pre-carboxysome by the RbcS-like domains of probably both CcmM58 and CcmM35. CcmN interacts with the N-terminus of CcmM58, and then recruits the CcmK2 major shell protein via CcmN's encapsulation peptide. Shell formation requires CcmK proteins and CcmO. CcmL caps the otherwise elongated carboxysome. Once fully encapsulated carboxysomes are formed, they migrate within the cell probably via interactions with the cytoskeleton. The sequence is that of Carboxysome assembly protein CcmN from Synechococcus elongatus (strain ATCC 33912 / PCC 7942 / FACHB-805) (Anacystis nidulans R2).